The sequence spans 514 residues: Sugar transport protein 10 (514 aa).

Residues 1-18 (MAGGAFVSEGGGGGRSYE) are Cytoplasmic-facing. The next 10 helical transmembrane spans lie at 19–39 (GGVTAFVIMTCIVAAMGGLLF), 86–106 (LFTSSLYLAALVASFMASVIT), 113–133 (VSMFIGGLAFLIGALFNAFAV), 135–155 (VSMLIIGRLLLGVGVGFANQS), 170–190 (GALNIGFQMAITIGILVANLI), 204–224 (VSLGLAAVPAVVMVIGSFILP), 285–305 (LIFCSAIPFFQQITGINVIMF), 320–340 (AALMSAVITGVVNMLSTFVSI), 350–370 (LLFLEGGIQMFICQLLVGSFI), and 389–409 (WILAFICVYVAGFAWSWGPLG). The cysteines at positions 77 and 449 are disulfide-linked. Residue Gln-177 participates in beta-D-glucose binding. Positions 295, 296, 301, and 332 each coordinate beta-D-glucose. Trp-410 provides a ligand contact to beta-D-glucose. 2 helical membrane passes run 428–448 (INVSVNMFFTFLIGQFFLTML) and 453–473 (FGLFYFFASMVAIMTVFIYFL). Residues 474–514 (LPETKGVPIEEMGRVWKQHWFWKKYIPEDAIIGGHDDNNTN) are Cytoplasmic-facing.

The protein belongs to the major facilitator superfamily. Sugar transporter (TC 2.A.1.1) family. In terms of tissue distribution, expressed in primordia of lateral roots, pollinated stigmata, and pollen tubes.

The protein localises to the membrane. It catalyses the reaction D-glucose(out) + H(+)(out) = D-glucose(in) + H(+)(in). It carries out the reaction D-mannose(out) + H(+)(out) = D-mannose(in) + H(+)(in). The catalysed reaction is D-galactose(in) + H(+)(in) = D-galactose(out) + H(+)(out). Its function is as follows. Hexose-H(+) symporter that catalyzes the high-affinity uptake of glucose, galactose and mannose. Proton-coupled symporter responsible for the uptake of glucose from the apoplast into the cells. This Arabidopsis thaliana (Mouse-ear cress) protein is Sugar transport protein 10.